A 347-amino-acid chain; its full sequence is Anthranilate phosphoribosyltransferase (347 aa).

Residues Gly88, Gly91–Asp92, Thr96, Asn98–Thr101, Lys116–Ser124, and Ser128 contribute to the 5-phospho-alpha-D-ribose 1-diphosphate site. Gly88 is an anthranilate binding site. Position 100 (Ser100) interacts with Mg(2+). Asn119 contributes to the anthranilate binding site. Anthranilate is bound at residue Arg174. Asp232 and Glu233 together coordinate Mg(2+).

The protein belongs to the anthranilate phosphoribosyltransferase family. As to quaternary structure, homodimer. Mg(2+) is required as a cofactor.

It carries out the reaction N-(5-phospho-beta-D-ribosyl)anthranilate + diphosphate = 5-phospho-alpha-D-ribose 1-diphosphate + anthranilate. It participates in amino-acid biosynthesis; L-tryptophan biosynthesis; L-tryptophan from chorismate: step 2/5. Functionally, catalyzes the transfer of the phosphoribosyl group of 5-phosphorylribose-1-pyrophosphate (PRPP) to anthranilate to yield N-(5'-phosphoribosyl)-anthranilate (PRA). This Shewanella sp. (strain ANA-3) protein is Anthranilate phosphoribosyltransferase.